The following is a 377-amino-acid chain: Chaperone protein DnaJ (377 aa).

In terms of domain architecture, J spans 5-69 (DYYEVLGVSK…NKRANYDQFG (65 aa)). Residues 134–216 (GTEKEISIRK…CHGKGTETKN (83 aa)) form a CR-type zinc finger. The Zn(2+) site is built by C147, C150, C164, C167, C190, C193, C204, and C207. CXXCXGXG motif repeat units lie at residues 147-154 (CETCDGSG), 164-171 (CHYCNGSG), 190-197 (CPVCNGTG), and 204-211 (CPTCHGKG).

This sequence belongs to the DnaJ family. Homodimer. It depends on Zn(2+) as a cofactor.

It is found in the cytoplasm. In terms of biological role, participates actively in the response to hyperosmotic and heat shock by preventing the aggregation of stress-denatured proteins and by disaggregating proteins, also in an autonomous, DnaK-independent fashion. Unfolded proteins bind initially to DnaJ; upon interaction with the DnaJ-bound protein, DnaK hydrolyzes its bound ATP, resulting in the formation of a stable complex. GrpE releases ADP from DnaK; ATP binding to DnaK triggers the release of the substrate protein, thus completing the reaction cycle. Several rounds of ATP-dependent interactions between DnaJ, DnaK and GrpE are required for fully efficient folding. Also involved, together with DnaK and GrpE, in the DNA replication of plasmids through activation of initiation proteins. This is Chaperone protein DnaJ from Staphylococcus carnosus (strain TM300).